The sequence spans 265 residues: Orotidine 5'-phosphate decarboxylase (265 aa).

Substrate is bound by residues aspartate 37, 59–61 (KTH), 91–100 (DRKFADIGNT), tyrosine 217, and arginine 235. Lysine 93 acts as the Proton donor in catalysis.

This sequence belongs to the OMP decarboxylase family.

It catalyses the reaction orotidine 5'-phosphate + H(+) = UMP + CO2. It functions in the pathway pyrimidine metabolism; UMP biosynthesis via de novo pathway; UMP from orotate: step 2/2. The polypeptide is Orotidine 5'-phosphate decarboxylase (URA3) (Diutina rugosa (Yeast)).